The sequence spans 312 residues: Malate dehydrogenase (312 aa).

NAD(+) is bound by residues 7–13 (GAAGGIG) and aspartate 34. Residues arginine 81 and arginine 87 each contribute to the substrate site. Residues asparagine 94 and 117 to 119 (ITN) contribute to the NAD(+) site. Asparagine 119 and arginine 153 together coordinate substrate. Residue histidine 177 is the Proton acceptor of the active site. Methionine 227 provides a ligand contact to NAD(+).

This sequence belongs to the LDH/MDH superfamily. MDH type 1 family. In terms of assembly, homodimer.

It catalyses the reaction (S)-malate + NAD(+) = oxaloacetate + NADH + H(+). Functionally, catalyzes the reversible oxidation of malate to oxaloacetate. The polypeptide is Malate dehydrogenase (Escherichia coli O17:K52:H18 (strain UMN026 / ExPEC)).